The chain runs to 193 residues: MKNYQLVLASTSPFRQQLLEKLSVPFICLSPDCDETPYESEAPLDLVQRLAVNKATSCSIKKPSLVIGSDQVCVIDGKIVGKPLNRENAINQLLAQSGKAITFYTGLAVYNSVTNLTEVGYDTFEVHFRNLNREQIERYVDREEPFYCAGSFKSEGMGICLFEKLVGKDPNTLVGLPLIDLIDMLQKQGFEIL.

D70 acts as the Proton acceptor in catalysis.

It belongs to the Maf family. YceF subfamily. It depends on a divalent metal cation as a cofactor.

It is found in the cytoplasm. It catalyses the reaction N(7)-methyl-GTP + H2O = N(7)-methyl-GMP + diphosphate + H(+). Functionally, nucleoside triphosphate pyrophosphatase that hydrolyzes 7-methyl-GTP (m(7)GTP). May have a dual role in cell division arrest and in preventing the incorporation of modified nucleotides into cellular nucleic acids. This is 7-methyl-GTP pyrophosphatase from Vibrio parahaemolyticus serotype O3:K6 (strain RIMD 2210633).